The chain runs to 433 residues: sn-glycerol-3-phosphate-binding periplasmic protein UgpB (433 aa).

Residues 1 to 25 (MFTRLITTSALTGAIALTIGSQAFA) form the signal peptide. The sn-glycerol 3-phosphate site is built by tyrosine 67, aspartate 91, serine 146, serine 273, glycine 307, tyrosine 346, and arginine 397.

The protein belongs to the bacterial solute-binding protein 1 family. As to quaternary structure, the complex is composed of two ATP-binding proteins (UgpC), two transmembrane proteins (UgpA and UgpE) and a solute-binding protein (UgpB).

Its subcellular location is the periplasm. Functionally, part of the ABC transporter complex UgpBAEC involved in sn-glycerol-3-phosphate (G3P) import. Binds G3P. In Brucella suis biovar 1 (strain 1330), this protein is sn-glycerol-3-phosphate-binding periplasmic protein UgpB (ugpB).